Consider the following 318-residue polypeptide: Biotin synthase (318 aa).

The Radical SAM core domain occupies 44–273 (LCGKKFNLCT…EKQIRLAGGR (230 aa)). Positions 62, 66, and 69 each coordinate [4Fe-4S] cluster. Residues Ser-106, Cys-138, Cys-198, and Arg-268 each coordinate [2Fe-2S] cluster.

It belongs to the radical SAM superfamily. Biotin synthase family. In terms of assembly, homodimer. Requires [4Fe-4S] cluster as cofactor. [2Fe-2S] cluster serves as cofactor.

The catalysed reaction is (4R,5S)-dethiobiotin + (sulfur carrier)-SH + 2 reduced [2Fe-2S]-[ferredoxin] + 2 S-adenosyl-L-methionine = (sulfur carrier)-H + biotin + 2 5'-deoxyadenosine + 2 L-methionine + 2 oxidized [2Fe-2S]-[ferredoxin]. The protein operates within cofactor biosynthesis; biotin biosynthesis; biotin from 7,8-diaminononanoate: step 2/2. In terms of biological role, catalyzes the conversion of dethiobiotin (DTB) to biotin by the insertion of a sulfur atom into dethiobiotin via a radical-based mechanism. This Clostridium botulinum (strain Alaska E43 / Type E3) protein is Biotin synthase.